Consider the following 167-residue polypeptide: Aphrodisin (167 aa).

An N-terminal signal peptide occupies residues 1–16; sequence MVKILLLALVFSLAHA. Gln-17 carries the post-translational modification Pyrrolidone carboxylic acid. 2 cysteine pairs are disulfide-bonded: Cys-54–Cys-58 and Cys-73–Cys-165. 2 N-linked (GlcNAc...) asparagine glycosylation sites follow: Asn-57 and Asn-85.

The protein belongs to the calycin superfamily. Lipocalin family. Expressed in the vagina, uterus, and Bartholin's glands of female hamsters. Secreted in vaginal discharge.

It is found in the secreted. In terms of biological role, acts as an aphrodisiac pheromone, reliably eliciting copulatory behavior from male hamster. This is Aphrodisin from Cricetus cricetus (Black-bellied hamster).